The primary structure comprises 324 residues: uncharacterized protein (324 aa).

This is an uncharacterized protein from Borreliella burgdorferi (strain ATCC 35210 / DSM 4680 / CIP 102532 / B31) (Borrelia burgdorferi).